The following is a 423-amino-acid chain: Kynureninase (423 aa).

Pyridoxal 5'-phosphate contacts are provided by residues leucine 105, serine 106, 133 to 136 (FPSD), aspartate 218, histidine 221, and tyrosine 243. An N6-(pyridoxal phosphate)lysine modification is found at lysine 244. Residues tryptophan 273 and asparagine 301 each coordinate pyridoxal 5'-phosphate.

Belongs to the kynureninase family. Homodimer. It depends on pyridoxal 5'-phosphate as a cofactor.

It carries out the reaction L-kynurenine + H2O = anthranilate + L-alanine + H(+). The enzyme catalyses 3-hydroxy-L-kynurenine + H2O = 3-hydroxyanthranilate + L-alanine + H(+). It participates in amino-acid degradation; L-kynurenine degradation; L-alanine and anthranilate from L-kynurenine: step 1/1. It functions in the pathway cofactor biosynthesis; NAD(+) biosynthesis; quinolinate from L-kynurenine: step 2/3. In terms of biological role, catalyzes the cleavage of L-kynurenine (L-Kyn) and L-3-hydroxykynurenine (L-3OHKyn) into anthranilic acid (AA) and 3-hydroxyanthranilic acid (3-OHAA), respectively. This chain is Kynureninase, found in Xanthomonas euvesicatoria pv. vesicatoria (strain 85-10) (Xanthomonas campestris pv. vesicatoria).